The following is a 184-amino-acid chain: uncharacterized protein (184 aa).

The Nudix hydrolase domain occupies Leu-36–Leu-164. Residues Gly-73–Gly-95 carry the Nudix box motif. Residues Glu-89 and Glu-93 each coordinate Mg(2+).

This sequence belongs to the Nudix hydrolase family. The cofactor is Mg(2+).

This is an uncharacterized protein from Salmonella typhi.